A 324-amino-acid polypeptide reads, in one-letter code: Dolichyl-phosphate beta-glucosyltransferase (324 aa).

Residues 1-7 (MATLLLQ) are Lumenal-facing. Residues 8–28 (LLGLGVALAAAALILVSIVAF) traverse the membrane as a helical segment. Residues 29–324 (ITATKMPPCY…WRLKQTRKAS (296 aa)) are Cytoplasmic-facing.

Belongs to the glycosyltransferase 2 family.

The protein resides in the endoplasmic reticulum membrane. It carries out the reaction a di-trans,poly-cis-dolichyl phosphate + UDP-alpha-D-glucose = a di-trans,poly-cis-dolichyl beta-D-glucosyl phosphate + UDP. The protein operates within protein modification; protein glycosylation. Its function is as follows. Dolichyl-phosphate beta-glucosyltransferase that operates in the biosynthetic pathway of dolichol-linked oligosaccharides, the glycan precursors employed in protein asparagine (N)-glycosylation. The assembly of dolichol-linked oligosaccharides begins on the cytosolic side of the endoplasmic reticulum membrane and finishes in its lumen. The sequential addition of sugars to dolichol pyrophosphate produces dolichol-linked oligosaccharides containing fourteen sugars, including two GlcNAcs, nine mannoses and three glucoses. Once assembled, the oligosaccharide is transferred from the lipid to nascent proteins by oligosaccharyltransferases. Dolichyl-phosphate beta-glucosyltransferase produces dolichyl beta-D-glucosyl phosphate/Dol-P-Glc, the glucose donor substrate used sequentially by ALG6, ALG8 and ALG10 to add glucose residues on top of the Man(9)GlcNAc(2)-PP-Dol structure. These are the three last steps in the biosynthetic pathway of dolichol-linked oligosaccharides to produce Glc(3)Man(9)GlcNAc(2)-PP-Dol. The enzyme is most probably active on the cytoplasmic side of the endoplasmic reticulum while its product Dol-P-Glc is the substrate for ALG6, ALG8 and ALG11 in the lumen of the endoplasmic reticulum. The polypeptide is Dolichyl-phosphate beta-glucosyltransferase (Mus musculus (Mouse)).